The chain runs to 101 residues: Aspartyl/glutamyl-tRNA(Asn/Gln) amidotransferase subunit C (101 aa).

It belongs to the GatC family. Heterotrimer of A, B and C subunits.

It catalyses the reaction L-glutamyl-tRNA(Gln) + L-glutamine + ATP + H2O = L-glutaminyl-tRNA(Gln) + L-glutamate + ADP + phosphate + H(+). It carries out the reaction L-aspartyl-tRNA(Asn) + L-glutamine + ATP + H2O = L-asparaginyl-tRNA(Asn) + L-glutamate + ADP + phosphate + 2 H(+). Allows the formation of correctly charged Asn-tRNA(Asn) or Gln-tRNA(Gln) through the transamidation of misacylated Asp-tRNA(Asn) or Glu-tRNA(Gln) in organisms which lack either or both of asparaginyl-tRNA or glutaminyl-tRNA synthetases. The reaction takes place in the presence of glutamine and ATP through an activated phospho-Asp-tRNA(Asn) or phospho-Glu-tRNA(Gln). This is Aspartyl/glutamyl-tRNA(Asn/Gln) amidotransferase subunit C from Salinispora tropica (strain ATCC BAA-916 / DSM 44818 / JCM 13857 / NBRC 105044 / CNB-440).